Consider the following 195-residue polypeptide: Alkyl hydroperoxide reductase C (195 aa).

The Thioredoxin domain occupies 4 to 170 (LTIGDQFPEY…VLRVLDALQS (167 aa)). Lysine 41 participates in a covalent cross-link: Isoglutamyl lysine isopeptide (Lys-Gln) (interchain with Q-Cter in protein Pup). Cysteine 61 (cysteine sulfenic acid (-SOH) intermediate) is an active-site residue.

The protein belongs to the peroxiredoxin family. AhpC/Prx1 subfamily. As to quaternary structure, homodimer; disulfide-linked, upon oxidation. 6 homodimers assemble to form a ring-like dodecamer. Identified in a complex with AhpD, DlaT and Lpd.

It is found in the cytoplasm. It catalyses the reaction N(6)-[(R)-dihydrolipoyl]-L-lysyl-[lipoyl-carrier protein] + a hydroperoxide = N(6)-[(R)-lipoyl]-L-lysyl-[lipoyl-carrier protein] + an alcohol + H2O. In terms of biological role, thiol-specific peroxidase that catalyzes the reduction of hydrogen peroxide and organic hydroperoxides to water and alcohols, respectively. Plays a role in cell protection against oxidative stress by detoxifying peroxides. Together with AhpD, DlaT and Lpd, constitutes an NADH-dependent peroxidase active against hydrogen and alkyl peroxides as well as serving as a peroxynitrite reductase, thus protecting the bacterium against reactive nitrogen intermediates and oxidative stress generated by the host immune system. Does not however seem to play a role in detoxification of isoniazid. The protein is Alkyl hydroperoxide reductase C of Mycolicibacterium smegmatis (strain ATCC 700084 / mc(2)155) (Mycobacterium smegmatis).